The primary structure comprises 356 residues: Phosphoserine aminotransferase (356 aa).

Arg41 contributes to the L-glutamate binding site. Pyridoxal 5'-phosphate-binding positions include 75–76 (AT), Trp100, Thr147, Asp166, and Gln189. Position 190 is an N6-(pyridoxal phosphate)lysine (Lys190). 227-228 (NT) contributes to the pyridoxal 5'-phosphate binding site.

This sequence belongs to the class-V pyridoxal-phosphate-dependent aminotransferase family. SerC subfamily. Homodimer. Requires pyridoxal 5'-phosphate as cofactor.

Its subcellular location is the cytoplasm. It carries out the reaction O-phospho-L-serine + 2-oxoglutarate = 3-phosphooxypyruvate + L-glutamate. It catalyses the reaction 4-(phosphooxy)-L-threonine + 2-oxoglutarate = (R)-3-hydroxy-2-oxo-4-phosphooxybutanoate + L-glutamate. It participates in amino-acid biosynthesis; L-serine biosynthesis; L-serine from 3-phospho-D-glycerate: step 2/3. Its function is as follows. Catalyzes the reversible conversion of 3-phosphohydroxypyruvate to phosphoserine and of 3-hydroxy-2-oxo-4-phosphonooxybutanoate to phosphohydroxythreonine. This is Phosphoserine aminotransferase from Exiguobacterium sp. (strain ATCC BAA-1283 / AT1b).